The following is a 272-amino-acid chain: ATP synthase subunit a (272 aa).

The next 7 membrane-spanning stretches (helical) occupy residues 39–59 (GFWAVHVDTLGWSLFMGLIFI), 103–123 (VAPLALTIFVWVFLMNSLKWI), 124–144 (PVDYIPGLAHAMGLPYFKIVP), 152–172 (FGISLGVFLLIIFYSIKVKGV), 181–201 (FTPFNHWALIPFNLFLEIIGL), 221–241 (VVFILIALLPFYVQWGLNVPW), and 242–262 (AIFHILVIPLQAFIFMVLTVV).

This sequence belongs to the ATPase A chain family. In terms of assembly, F-type ATPases have 2 components, CF(1) - the catalytic core - and CF(0) - the membrane proton channel. CF(1) has five subunits: alpha(3), beta(3), gamma(1), delta(1), epsilon(1). CF(0) has three main subunits: a(1), b(2) and c(9-12). The alpha and beta chains form an alternating ring which encloses part of the gamma chain. CF(1) is attached to CF(0) by a central stalk formed by the gamma and epsilon chains, while a peripheral stalk is formed by the delta and b chains.

It is found in the cell inner membrane. In terms of biological role, key component of the proton channel; it plays a direct role in the translocation of protons across the membrane. The sequence is that of ATP synthase subunit a from Ectopseudomonas mendocina (strain ymp) (Pseudomonas mendocina).